Here is a 129-residue protein sequence, read N- to C-terminus: Ribulose bisphosphate carboxylase small subunit (129 aa).

Positions Glu104–Ser120 are enriched in basic and acidic residues. The interval Glu104–Arg129 is disordered.

This sequence belongs to the RuBisCO small chain family. In terms of assembly, heterohexadecamer of 8 large and 8 small subunits.

Its function is as follows. RuBisCO catalyzes two reactions: the carboxylation of D-ribulose 1,5-bisphosphate, the primary event in carbon dioxide fixation, as well as the oxidative fragmentation of the pentose substrate. Both reactions occur simultaneously and in competition at the same active site. Although the small subunit is not catalytic it is essential for maximal activity. The sequence is that of Ribulose bisphosphate carboxylase small subunit from Sinorhizobium medicae (strain WSM419) (Ensifer medicae).